The primary structure comprises 342 residues: MTPHRFPANWFLKARLKLRHLQLFVALDEHRNLHRAAASLTMSQPAASKLLGDLEESLGVTLFERHGRGVEPNWYGGLMIRHARTILSGLQEAGEELNDLLAGHSGSVSIGTVMAPAVELVVPVITTLTRDHPDLKIAVAVETSDVLAERVRQGVMDFAIGRLPDHVDASCFDYQEISSEELCFVCRDGHPLLRLGRPLTAADLVDATWILQPLGSLLRSRVEALFRAEGVPPPRKVIESASPVISLAMVAENDSVTVFARALAQVFSPTGSCTIVPFHKRFSVEPYGIFWLKDRPLSPGARTALAALRAASDTKMRRALEMPQPSSSSDIEMCMDSANNRI.

The HTH lysR-type domain maps to 16-73 (LKLRHLQLFVALDEHRNLHRAAASLTMSQPAASKLLGDLEESLGVTLFERHGRGVEPN). The H-T-H motif DNA-binding region spans 33–52 (LHRAAASLTMSQPAASKLLG).

This sequence belongs to the LysR transcriptional regulatory family.

In terms of biological role, does not seem to be required for sbpA expression. This is HTH-type transcriptional regulator GbpR (gbpR) from Azospirillum brasilense.